Consider the following 208-residue polypeptide: Proheparin-binding EGF-like growth factor (208 aa).

An N-terminal signal peptide occupies residues 1-23 (MKLLPSVMLKLFLAAVLSALVTG). Positions 24 to 62 (ESLERLRRGLAAATSNPDPPTGSTNQLLPTGGDRAQGVQ) are excised as a propeptide. Residues 24–160 (ESLERLRRGL…ENPLYTYDHT (137 aa)) lie on the Extracellular side of the membrane. Disordered stretches follow at residues 35–57 (AATS…GGDR) and 80–104 (PQGL…LGKK). Over residues 36–51 (ATSNPDPPTGSTNQLL) the composition is skewed to polar residues. T85 is a glycosylation site (O-linked (GalNAc...) threonine). Residues 91 to 102 (NGKKKKKGKGLG) show a composition bias toward basic residues. The 41-residue stretch at 104-144 (KRDPCLRKYKDYCIHGECRYLQEFRTPSCKCLPGYHGHRCH) folds into the EGF-like domain. Disulfide bonds link C108/C121, C116/C132, and C134/C143. Residues 149 to 208 (PVENPLYTYDHTTVLAVVAVVLSSVCLLVIVGLLMFRYHRRGGYDLESEEKVKLGVASSH) constitute a propeptide, C-terminal. A helical transmembrane segment spans residues 161-184 (TVLAVVAVVLSSVCLLVIVGLLMF). Residues 185–208 (RYHRRGGYDLESEEKVKLGVASSH) lie on the Cytoplasmic side of the membrane.

In terms of assembly, interacts with FBLN1. Interacts with EGFR and ERBB4. Post-translationally, O-glycosylated. In terms of tissue distribution, most abundant in kidney, skeletal muscle, lung, spleen, brain and heart.

It is found in the secreted. The protein localises to the extracellular space. Its subcellular location is the cell membrane. In terms of biological role, growth factor that mediates its effects via EGFR, ERBB2 and ERBB4. Required for normal cardiac valve formation and normal heart function. Promotes smooth muscle cell proliferation. May be involved in macrophage-mediated cellular proliferation. It is mitogenic for fibroblasts, but not endothelial cells. It is able to bind EGF receptor/EGFR with higher affinity than EGF itself and is a far more potent mitogen for smooth muscle cells than EGF. Also acts as a diphtheria toxin receptor. This Mus musculus (Mouse) protein is Proheparin-binding EGF-like growth factor (Hbegf).